Reading from the N-terminus, the 97-residue chain is Integration host factor subunit alpha (97 aa).

The protein belongs to the bacterial histone-like protein family. Heterodimer of an alpha and a beta chain.

Functionally, this protein is one of the two subunits of integration host factor, a specific DNA-binding protein that functions in genetic recombination as well as in transcriptional and translational control. The chain is Integration host factor subunit alpha from Histophilus somni (strain 2336) (Haemophilus somnus).